We begin with the raw amino-acid sequence, 135 residues long: Histone H3.3C (135 aa).

The interval 1–41 (MARTKQTARKSTGGKAPRKQLATKAARKSTPSTCGVKPHRY) is disordered. Arg-3 carries the asymmetric dimethylarginine; by PRMT6; alternate modification. Arg-3 is subject to Citrulline; alternate. Thr-4 carries the phosphothreonine; by HASPIN modification. Residue Lys-5 is modified to Allysine; alternate. Lys-5 is modified (N6,N6,N6-trimethyllysine; alternate). Lys-5 carries the post-translational modification N6,N6-dimethyllysine; alternate. The residue at position 5 (Lys-5) is an N6-(2-hydroxyisobutyryl)lysine; alternate. Lys-5 carries the post-translational modification N6-(beta-hydroxybutyryl)lysine; alternate. Lys-5 is subject to N6-acetyllysine; alternate. An N6-methyllysine; alternate modification is found at Lys-5. Gln-6 bears the 5-glutamyl dopamine; alternate mark. Gln-6 is modified (5-glutamyl serotonin; alternate). Thr-7 is modified (phosphothreonine; by PKC). Arg-9 carries the post-translational modification Citrulline; alternate. The residue at position 9 (Arg-9) is a Symmetric dimethylarginine; by PRMT5; alternate. Residue Lys-10 is modified to N6,N6,N6-trimethyllysine; alternate. Position 10 is an N6,N6-dimethyllysine; alternate (Lys-10). At Lys-10 the chain carries N6-(2-hydroxyisobutyryl)lysine; alternate. N6-(beta-hydroxybutyryl)lysine; alternate is present on Lys-10. Lys-10 is modified (N6-acetyllysine; alternate). The residue at position 10 (Lys-10) is an N6-methyllysine; alternate. An N6-lactoyllysine; alternate modification is found at Lys-10. Ser-11 is modified (ADP-ribosylserine; alternate). Phosphoserine; alternate; by AURKB, AURKC, RPS6KA3, RPS6KA4 and RPS6KA5 is present on Ser-11. At Thr-12 the chain carries Phosphothreonine; by PKC. Residue Lys-15 is modified to N6-(2-hydroxyisobutyryl)lysine; alternate. Lys-15 carries the N6-(beta-hydroxybutyryl)lysine; alternate modification. Residue Lys-15 is modified to N6-acetyllysine; alternate. Lys-15 is modified (N6-lactoyllysine; alternate). Residue Lys-15 is modified to N6-glutaryllysine; alternate. Lys-15 bears the N6-succinyllysine; alternate mark. Arg-18 carries the post-translational modification Citrulline; alternate. Arg-18 bears the Asymmetric dimethylarginine; by CARM1; alternate mark. Residues Lys-19 and Lys-24 each carry the N6-(2-hydroxyisobutyryl)lysine; alternate modification. N6-(beta-hydroxybutyryl)lysine; alternate occurs at positions 19 and 24. An N6-acetyllysine; alternate mark is found at Lys-19 and Lys-24. 2 positions are modified to N6-methyllysine; alternate: Lys-19 and Lys-24. Residues Lys-19 and Lys-24 each carry the N6-lactoyllysine; alternate modification. 2 positions are modified to N6-glutaryllysine; alternate: Lys-19 and Lys-24. Residues Lys-19 and Lys-24 each carry the N6-butyryllysine; alternate modification. A Citrulline modification is found at Arg-27. Lys-28 bears the N6,N6,N6-trimethyllysine; alternate mark. At Lys-28 the chain carries N6,N6-dimethyllysine; alternate. Lys-28 carries the post-translational modification N6-(2-hydroxyisobutyryl)lysine; alternate. Lys-28 is modified (N6-acetyllysine; alternate). Residue Lys-28 is modified to N6-methyllysine; alternate. Lys-28 is modified (N6-lactoyllysine; alternate). Lys-28 bears the N6-glutaryllysine; alternate mark. At Ser-29 the chain carries ADP-ribosylserine; alternate. The residue at position 29 (Ser-29) is a Phosphoserine; alternate; by AURKB, AURKC and RPS6KA5. Ser-32 is modified (phosphoserine). Lys-37 carries the post-translational modification N6-methyllysine. Tyr-41 is subject to Phosphotyrosine. Residue Lys-56 is modified to N6,N6,N6-trimethyllysine; alternate. Residue Lys-56 is modified to N6-(2-hydroxyisobutyryl)lysine; alternate. Lys-56 bears the N6-(beta-hydroxybutyryl)lysine; alternate mark. Lys-56 carries the N6-acetyllysine; alternate modification. An N6-lactoyllysine; alternate modification is found at Lys-56. At Lys-56 the chain carries N6-glutaryllysine; alternate. An N6-succinyllysine; alternate modification is found at Lys-56. Lys-56 carries the post-translational modification N6-methyllysine; by EHMT2; alternate. Ser-57 is subject to Phosphoserine. An N6-(2-hydroxyisobutyryl)lysine; alternate modification is found at Lys-64. An N6-methyllysine; alternate modification is found at Lys-64. Thr-80 bears the Phosphothreonine mark. Ser-86 is modified (phosphoserine). Thr-107 carries the post-translational modification Phosphothreonine. N6-glutaryllysine; alternate is present on residues Lys-115 and Lys-122. The residue at position 115 (Lys-115) is an N6-acetyllysine. N6-(2-hydroxyisobutyryl)lysine; alternate is present on Lys-122. Lys-122 carries the post-translational modification N6-acetyllysine; alternate. Lys-122 bears the N6-methyllysine; alternate mark. The residue at position 122 (Lys-122) is an N6-succinyllysine; alternate.

This sequence belongs to the histone H3 family. As to quaternary structure, the nucleosome is a histone octamer containing two molecules each of H2A, H2B, H3 and H4 assembled in one H3-H4 heterotetramer and two H2A-H2B heterodimers. The octamer wraps approximately 147 bp of DNA. Acetylation is generally linked to gene activation. Acetylation on Lys-10 (H3K9ac) impairs methylation at Arg-9 (H3R8me2s). Acetylation on Lys-19 (H3K18ac) and Lys-24 (H3K24ac) favors methylation at Arg-18 (H3R17me). Acetylation at Lys-122 (H3K122ac) by EP300/p300 plays a central role in chromatin structure: localizes at the surface of the histone octamer and stimulates transcription, possibly by promoting nucleosome instability. Post-translationally, citrullination at Arg-9 (H3R8ci) and/or Arg-18 (H3R17ci) by PADI4 impairs methylation and represses transcription. In terms of processing, asymmetric dimethylation at Arg-18 (H3R17me2a) by CARM1 is linked to gene activation. Symmetric dimethylation at Arg-9 (H3R8me2s) by PRMT5 is linked to gene repression. Asymmetric dimethylation at Arg-3 (H3R2me2a) by PRMT6 is linked to gene repression and is mutually exclusive with H3 Lys-5 methylation (H3K4me2 and H3K4me3). H3R2me2a is present at the 3' of genes regardless of their transcription state and is enriched on inactive promoters, while it is absent on active promoters. Methylation at Lys-5 (H3K4me) is linked to gene activation. Methylation at Lys-5 (H3K4me) facilitates subsequent acetylation of H3 and H4. Methylation at Lys-10 (H3K9me) and Lys-28 (H3K27me) are linked to gene repression. Methylation at Lys-10 (H3K9me) is a specific target for HP1 proteins (CBX1, CBX3 and CBX5) and prevents subsequent phosphorylation at Ser-11 (H3S10ph) and acetylation of H3 and H4. Methylation at Lys-5 (H3K4me) requires preliminary monoubiquitination of H2B at 'Lys-120'. Methylation at Lys-10 (H3K9me) and Lys-28 (H3K27me) are enriched in inactive X chromosome chromatin. Monomethylation at Lys-56 (H3K56me1) by EHMT2/G9A in G1 phase promotes interaction with PCNA and is required for DNA replication. Post-translationally, phosphorylated at Thr-4 (H3T3ph) by HASPIN during prophase and dephosphorylated during anaphase. Phosphorylation at Ser-11 (H3S10ph) by AURKB is crucial for chromosome condensation and cell-cycle progression during mitosis and meiosis. In addition phosphorylation at Ser-11 (H3S10ph) by RPS6KA4 and RPS6KA5 is important during interphase because it enables the transcription of genes following external stimulation, like mitogens, stress, growth factors or UV irradiation and result in the activation of genes, such as c-fos and c-jun. Phosphorylation at Ser-11 (H3S10ph), which is linked to gene activation, prevents methylation at Lys-10 (H3K9me) but facilitates acetylation of H3 and H4. Phosphorylation at Ser-11 (H3S10ph) by AURKB mediates the dissociation of HP1 proteins (CBX1, CBX3 and CBX5) from heterochromatin. Phosphorylation at Ser-11 (H3S10ph) is also an essential regulatory mechanism for neoplastic cell transformation. Phosphorylated at Ser-29 (H3S28ph) by MAP3K20 isoform 1, RPS6KA5 or AURKB during mitosis or upon ultraviolet B irradiation. Phosphorylation at Thr-7 (H3T6ph) by PRKCB is a specific tag for epigenetic transcriptional activation that prevents demethylation of Lys-5 (H3K4me) by LSD1/KDM1A. At centromeres, specifically phosphorylated at Thr-12 (H3T11ph) from prophase to early anaphase, by DAPK3 and PKN1. Phosphorylation at Thr-12 (H3T11ph) by PKN1 or isoform M2 of PKM (PKM2) is a specific tag for epigenetic transcriptional activation that promotes demethylation of Lys-10 (H3K9me) by KDM4C/JMJD2C. Phosphorylation at Tyr-41 (H3Y41ph) by JAK2 promotes exclusion of CBX5 (HP1 alpha) from chromatin. In terms of processing, lysine deamination at Lys-5 (H3K4all) to form allysine is mediated by LOXL2. Allysine formation by LOXL2 only takes place on H3K4me3 and results in gene repression. Butyrylation of histones marks active promoters and competes with histone acetylation. It is present during late spermatogenesis. Post-translationally, succinylated. Desuccinylation at Lys-122 (H3K122succ) by SIRT7 in response to DNA damage promotes chromatin condensation and double-strand breaks (DSBs) repair. In terms of processing, serine ADP-ribosylation constitutes the primary form of ADP-ribosylation of proteins in response to DNA damage. Serine ADP-ribosylation at Ser-11 (H3S10ADPr) is mutually exclusive with phosphorylation at Ser-11 (H3S10ph) and impairs acetylation at Lys-10 (H3K9ac). Specifically expressed in the seminiferous tubules of testis.

The protein resides in the nucleus. It is found in the chromosome. In terms of biological role, core component of nucleosome. Nucleosomes wrap and compact DNA into chromatin, limiting DNA accessibility to the cellular machineries which require DNA as a template. Histones thereby play a central role in transcription regulation, DNA repair, DNA replication and chromosomal stability. DNA accessibility is regulated via a complex set of post-translational modifications of histones, also called histone code, and nucleosome remodeling. Hominid-specific H3.5/H3F3C preferentially colocalizes with euchromatin, and it is associated with actively transcribed genes. In Homo sapiens (Human), this protein is Histone H3.3C.